A 558-amino-acid chain; its full sequence is Zeta-carotene desaturase, chloroplastic/chromoplastic (558 aa).

The transit peptide at 1–27 (MASSVVFAATGSLSVPPLKSRRFYVNS) directs the protein to the chloroplast and chromoplast.

This sequence belongs to the zeta carotene desaturase family. It depends on decylplastoquinone as a cofactor. Requires 6-decylubiquinone as cofactor. In terms of tissue distribution, highly expressed in leaves. Expressed at low levels in flowers and siliques.

It is found in the plastid. It localises to the chloroplast. The protein resides in the chromoplast. It carries out the reaction 9,9'-di-cis-zeta-carotene + 2 a quinone = 7,7',9,9'-tetra-cis-lycopene + 2 a quinol. It participates in carotenoid biosynthesis; lycopene biosynthesis. Its function is as follows. Plays a crucial role in plant growth and development. Is essential for the biosynthesis of carotenoids. Carotenoids are involved in different physiological processes, including coloration, photoprotection, biosynthesis of abscisic acid (ABA) and chloroplast biogenesis. Catalyzes the conversion of zeta-carotene to lycopene via the intermediary of neurosporene. It carries out two consecutive desaturations (introduction of double bonds) at positions C-7 and C-7'. Shows stereoselectivity toward trans C15-C15'zeta-carotene double bond. The zeta-carotene produced by the phytoene desaturase PDS has a C15-C15' double bond in the cis configuration and it requires isomerization before being recognized as substrate by ZDS. The main product is 7,9,7',9'-tetra-cis-lycopene (pro-lycopene). This is Zeta-carotene desaturase, chloroplastic/chromoplastic from Arabidopsis thaliana (Mouse-ear cress).